A 414-amino-acid chain; its full sequence is Secernin-1 (414 aa).

Ala2 carries the post-translational modification N-acetylalanine. Cys9 is an active-site residue.

Belongs to the peptidase C69 family. Secernin subfamily.

It localises to the cytoplasm. In terms of biological role, regulates exocytosis in mast cells. Increases both the extent of secretion and the sensitivity of mast cells to stimulation with calcium. The protein is Secernin-1 (SCRN1) of Homo sapiens (Human).